We begin with the raw amino-acid sequence, 1185 residues long: Zinc finger SWIM domain-containing protein 5 (1185 aa).

Residues 1–10 (MADGGEREEL) are compositionally biased toward basic and acidic residues. 2 disordered regions span residues 1–45 (MADG…GGAG) and 123–153 (AGAA…GSAP). The segment at 219–256 (YKVAISFDRCKITSVTCGCGNKDIFYCAHVVALSLYRI) adopts an SWIM-type zinc-finger fold.

This is Zinc finger SWIM domain-containing protein 5 (ZSWIM5) from Homo sapiens (Human).